A 311-amino-acid polypeptide reads, in one-letter code: Pyrimidine-specific ribonucleoside hydrolase RihA (311 aa).

Histidine 240 is an active-site residue.

Belongs to the IUNH family. RihA subfamily.

In terms of biological role, hydrolyzes cytidine or uridine to ribose and cytosine or uracil, respectively. This Salmonella typhimurium (strain LT2 / SGSC1412 / ATCC 700720) protein is Pyrimidine-specific ribonucleoside hydrolase RihA.